A 278-amino-acid polypeptide reads, in one-letter code: Formamidopyrimidine-DNA glycosylase (278 aa).

P2 functions as the Schiff-base intermediate with DNA in the catalytic mechanism. E3 acts as the Proton donor in catalysis. The active-site Proton donor; for beta-elimination activity is K58. DNA is bound by residues H91, R109, and R158. The FPG-type zinc-finger motif lies at 243–277; it reads KVYDRKGLPCKVCKTPISQMVQGQRTTYFCSQCQK. Catalysis depends on R267, which acts as the Proton donor; for delta-elimination activity.

The protein belongs to the FPG family. As to quaternary structure, monomer. The cofactor is Zn(2+).

The catalysed reaction is Hydrolysis of DNA containing ring-opened 7-methylguanine residues, releasing 2,6-diamino-4-hydroxy-5-(N-methyl)formamidopyrimidine.. It catalyses the reaction 2'-deoxyribonucleotide-(2'-deoxyribose 5'-phosphate)-2'-deoxyribonucleotide-DNA = a 3'-end 2'-deoxyribonucleotide-(2,3-dehydro-2,3-deoxyribose 5'-phosphate)-DNA + a 5'-end 5'-phospho-2'-deoxyribonucleoside-DNA + H(+). Involved in base excision repair of DNA damaged by oxidation or by mutagenic agents. Acts as a DNA glycosylase that recognizes and removes damaged bases. Has a preference for oxidized purines, such as 7,8-dihydro-8-oxoguanine (8-oxoG). Has AP (apurinic/apyrimidinic) lyase activity and introduces nicks in the DNA strand. Cleaves the DNA backbone by beta-delta elimination to generate a single-strand break at the site of the removed base with both 3'- and 5'-phosphates. The sequence is that of Formamidopyrimidine-DNA glycosylase from Polynucleobacter necessarius subsp. necessarius (strain STIR1).